A 235-amino-acid polypeptide reads, in one-letter code: Succinate dehydrogenase iron-sulfur subunit (235 aa).

[2Fe-2S] cluster-binding residues include cysteine 53, cysteine 58, and cysteine 73. A 4Fe-4S ferredoxin-type domain is found at 133 to 163 (ERAKLDGLYECILCACCSSSCPSYWWNPDKF). Cysteine 143, cysteine 146, and cysteine 149 together coordinate [4Fe-4S] cluster. Cysteine 153 is a [3Fe-4S] cluster binding site. Tryptophan 158 is an a ubiquinone binding site. Residues cysteine 200 and cysteine 206 each coordinate [3Fe-4S] cluster. Cysteine 210 lines the [4Fe-4S] cluster pocket.

It belongs to the succinate dehydrogenase/fumarate reductase iron-sulfur protein family. As to quaternary structure, part of an enzyme complex containing four subunits: a flavoprotein, an iron-sulfur protein, cytochrome b-556 and a hydrophobic protein. [2Fe-2S] cluster serves as cofactor. It depends on [3Fe-4S] cluster as a cofactor. Requires [4Fe-4S] cluster as cofactor.

The catalysed reaction is a quinone + succinate = fumarate + a quinol. The protein operates within carbohydrate metabolism; tricarboxylic acid cycle; fumarate from succinate (bacterial route): step 1/1. This Coxiella burnetii (strain RSA 493 / Nine Mile phase I) protein is Succinate dehydrogenase iron-sulfur subunit (sdhB).